A 230-amino-acid chain; its full sequence is 2,3-bisphosphoglycerate-dependent phosphoglycerate mutase (230 aa).

Substrate is bound by residues 8–15 (RHGESEWN), 21–22 (TG), Arg60, 87–90 (ERHY), Lys98, 114–115 (RR), and 183–184 (GN). Catalysis depends on His9, which acts as the Tele-phosphohistidine intermediate. Glu87 functions as the Proton donor/acceptor in the catalytic mechanism.

This sequence belongs to the phosphoglycerate mutase family. BPG-dependent PGAM subfamily.

The enzyme catalyses (2R)-2-phosphoglycerate = (2R)-3-phosphoglycerate. It functions in the pathway carbohydrate degradation; glycolysis; pyruvate from D-glyceraldehyde 3-phosphate: step 3/5. Its function is as follows. Catalyzes the interconversion of 2-phosphoglycerate and 3-phosphoglycerate. The chain is 2,3-bisphosphoglycerate-dependent phosphoglycerate mutase from Streptococcus pneumoniae (strain ATCC BAA-255 / R6).